Here is a 257-residue protein sequence, read N- to C-terminus: Acetylglutamate kinase (257 aa).

Substrate is bound by residues 43 to 44 (GG), arginine 65, and asparagine 157.

It belongs to the acetylglutamate kinase family. ArgB subfamily.

It localises to the cytoplasm. The enzyme catalyses N-acetyl-L-glutamate + ATP = N-acetyl-L-glutamyl 5-phosphate + ADP. It functions in the pathway amino-acid biosynthesis; L-arginine biosynthesis; N(2)-acetyl-L-ornithine from L-glutamate: step 2/4. Its function is as follows. Catalyzes the ATP-dependent phosphorylation of N-acetyl-L-glutamate. The chain is Acetylglutamate kinase from Actinobacillus succinogenes (strain ATCC 55618 / DSM 22257 / CCUG 43843 / 130Z).